Consider the following 1032-residue polypeptide: Putative oxidoreductase YgfK (1032 aa).

Positions 928–958 (RFQTLHLDAYCNECGNCAQFCPWNGKPYKDK) constitute a 4Fe-4S ferredoxin-type domain. [4Fe-4S] cluster contacts are provided by C938, C941, C944, and C948.

[4Fe-4S] cluster serves as cofactor.

Functionally, could be an iron-sulfur flavoprotein with NADPH:O(2) oxidoreductase activity. This chain is Putative oxidoreductase YgfK (ygfK), found in Escherichia coli O157:H7.